We begin with the raw amino-acid sequence, 94 residues long: Scorpine-like-1 (94 aa).

A signal peptide spans 1–18; that stretch reads MNTKFTVLIFLGVIVVSY. The BetaSPN-type CS-alpha/beta domain occupies 54–94; that stretch reads EYGCMMDISWNKDCQRHCQSTEQKDGICHGMKCKCGKPRSY. Intrachain disulfides connect Cys-57/Cys-81, Cys-67/Cys-86, and Cys-71/Cys-88.

This sequence belongs to the long chain scorpion toxin family. Class 3 subfamily. In terms of tissue distribution, expressed by the venom gland.

The protein resides in the secreted. Its function is as follows. Has antibacterial activity. This Urodacus yaschenkoi (Inland robust scorpion) protein is Scorpine-like-1.